The sequence spans 504 residues: Histidine ammonia-lyase (504 aa).

Residues 142–144 constitute a cross-link (5-imidazolinone (Ala-Gly)); sequence ASG. Serine 143 is modified (2,3-didehydroalanine (Ser)).

This sequence belongs to the PAL/histidase family. Post-translationally, contains an active site 4-methylidene-imidazol-5-one (MIO), which is formed autocatalytically by cyclization and dehydration of residues Ala-Ser-Gly.

Its subcellular location is the cytoplasm. It catalyses the reaction L-histidine = trans-urocanate + NH4(+). The protein operates within amino-acid degradation; L-histidine degradation into L-glutamate; N-formimidoyl-L-glutamate from L-histidine: step 1/3. The protein is Histidine ammonia-lyase of Staphylococcus aureus (strain JH1).